A 286-amino-acid chain; its full sequence is 4-diphosphocytidyl-2-C-methyl-D-erythritol kinase (286 aa).

Lys11 is an active-site residue. Residue 94 to 104 participates in ATP binding; it reads PMGGGIGGGSS. Asp136 is an active-site residue.

This sequence belongs to the GHMP kinase family. IspE subfamily.

The catalysed reaction is 4-CDP-2-C-methyl-D-erythritol + ATP = 4-CDP-2-C-methyl-D-erythritol 2-phosphate + ADP + H(+). The protein operates within isoprenoid biosynthesis; isopentenyl diphosphate biosynthesis via DXP pathway; isopentenyl diphosphate from 1-deoxy-D-xylulose 5-phosphate: step 3/6. Its function is as follows. Catalyzes the phosphorylation of the position 2 hydroxy group of 4-diphosphocytidyl-2C-methyl-D-erythritol. The sequence is that of 4-diphosphocytidyl-2-C-methyl-D-erythritol kinase from Pseudomonas putida (strain ATCC 47054 / DSM 6125 / CFBP 8728 / NCIMB 11950 / KT2440).